The chain runs to 658 residues: Zinc finger protein 135 (658 aa).

Residues 14–85 (VTFEDVVVGF…ESRLPQGVYP (72 aa)) enclose the KRAB domain. The tract at residues 171–196 (LNPDLPHQPMTPERQSPHTWGTRGKR) is disordered. C2H2-type zinc fingers lie at residues 214–236 (YKCQ…HRTH), 242–264 (YECH…QRIH), 270–292 (YKCT…QRTH), 298–320 (YECS…ERTH), 326–348 (YECS…LRIH), 354–376 (YQCG…QRIH), 382–404 (YECH…QRTH), 410–432 (YECG…RRIH), 438–460 (YGCN…ERTH), 466–488 (YECS…QRIH), 494–516 (YECN…QRIH), 522–544 (YECN…QRIH), 550–572 (YECN…QRIH), 578–600 (YGCN…ERTH), 606–628 (YECH…RRIH), and 634–656 (YACR…QRTH).

Belongs to the krueppel C2H2-type zinc-finger protein family.

It is found in the nucleus. Functionally, plays a role in the regulation of cell morphology and cytoskeletal organization. May be involved in transcriptional regulation. The chain is Zinc finger protein 135 (ZNF135) from Homo sapiens (Human).